A 204-amino-acid polypeptide reads, in one-letter code: MISAQAVKELRERTGAGMMDCKKALMEANGDMEKAIDILREKGLAAAAKKAGRVANEGLVDAYIHSGGRIGVLVEVNCETDFVANTDEFKNFVKEICMQIAAANPKYISREDVPQAVLEKEREILKAQALNEGKPQNVVDRIVEGRIEKFYKENCLLEQEYIRDPEKTVKDLLNETIAKLGENIVIRRFVRFERGEGIETSSNE.

An involved in Mg(2+) ion dislocation from EF-Tu region spans residues 80 to 83 (TDFV).

The protein belongs to the EF-Ts family.

It localises to the cytoplasm. Functionally, associates with the EF-Tu.GDP complex and induces the exchange of GDP to GTP. It remains bound to the aminoacyl-tRNA.EF-Tu.GTP complex up to the GTP hydrolysis stage on the ribosome. The protein is Elongation factor Ts of Thermoanaerobacter sp. (strain X514).